The following is a 179-amino-acid chain: Isopentenyl-diphosphate Delta-isomerase (179 aa).

Residues histidine 25 and histidine 31 each coordinate Mn(2+). Positions 29 to 161 (ELHRAITVYI…PEQFTAWFQL (133 aa)) constitute a Nudix hydrolase domain. The active site involves cysteine 66. Mg(2+) is bound at residue cysteine 66. Histidine 68 provides a ligand contact to Mn(2+). A Mg(2+)-binding site is contributed by glutamate 86. Residues glutamate 111 and glutamate 113 each contribute to the Mn(2+) site. The active site involves glutamate 113.

It belongs to the IPP isomerase type 1 family. In terms of assembly, homodimer. The cofactor is Mg(2+). It depends on Mn(2+) as a cofactor.

The protein resides in the cytoplasm. The enzyme catalyses isopentenyl diphosphate = dimethylallyl diphosphate. It functions in the pathway isoprenoid biosynthesis; dimethylallyl diphosphate biosynthesis; dimethylallyl diphosphate from isopentenyl diphosphate: step 1/1. Catalyzes the 1,3-allylic rearrangement of the homoallylic substrate isopentenyl (IPP) to its highly electrophilic allylic isomer, dimethylallyl diphosphate (DMAPP). The chain is Isopentenyl-diphosphate Delta-isomerase from Pectobacterium atrosepticum (strain SCRI 1043 / ATCC BAA-672) (Erwinia carotovora subsp. atroseptica).